Reading from the N-terminus, the 76-residue chain is UPF0291 protein GK1331 (76 aa).

Residues Pro57–His76 are disordered. A compositionally biased stretch (basic and acidic residues) spans Thr63 to His76.

This sequence belongs to the UPF0291 family.

The protein localises to the cytoplasm. The chain is UPF0291 protein GK1331 from Geobacillus kaustophilus (strain HTA426).